We begin with the raw amino-acid sequence, 325 residues long: Porphobilinogen deaminase (325 aa).

Residue cysteine 253 is modified to S-(dipyrrolylmethanemethyl)cysteine.

The protein belongs to the HMBS family. It depends on dipyrromethane as a cofactor.

The enzyme catalyses 4 porphobilinogen + H2O = hydroxymethylbilane + 4 NH4(+). It participates in porphyrin-containing compound metabolism; protoporphyrin-IX biosynthesis; coproporphyrinogen-III from 5-aminolevulinate: step 2/4. Tetrapolymerization of the monopyrrole PBG into the hydroxymethylbilane pre-uroporphyrinogen in several discrete steps. The sequence is that of Porphobilinogen deaminase (hemC) from Dictyostelium discoideum (Social amoeba).